The sequence spans 420 residues: Zinc finger and BTB domain-containing protein 42 (420 aa).

A BTB domain is found at 24 to 92 (CDCTVLVGDA…MYEGRLDLHN (69 aa)). 2 disordered regions span residues 127-204 (TRTL…HPPC) and 222-247 (VKAE…PPPV). Positions 227-241 (DSFSEQDSSSPQSAD) are enriched in low complexity. 4 C2H2-type zinc fingers span residues 292-314 (CICP…LSAH), 332-354 (PTCP…ERTH), 360-382 (YTCV…AVVH), and 388-411 (HACR…RKFH).

It belongs to the krueppel C2H2-type zinc-finger protein family. ZBTB18 subfamily. Highly expressed in skeletal muscle and ovary (at protein level). Low expression in brain, lung, spleen, liver and heart (at protein level). Not detected in kidney and intestines (at protein level). Also observed in testis and, at lower levels, in stomach and nervous system.

The protein resides in the cytoplasm. It localises to the nucleus. It is found in the nucleoplasm. Functionally, transcriptional repressor. Specifically binds DNA and probably acts by recruiting chromatin remodeling multiprotein complexes. This Mus musculus (Mouse) protein is Zinc finger and BTB domain-containing protein 42 (Zbtb42).